Here is a 152-residue protein sequence, read N- to C-terminus: Large ribosomal subunit protein uL15 (152 aa).

Positions 1 to 13 (MLTLGNLSPQEGS) are enriched in polar residues. Residues 1-62 (MLTLGNLSPQ…GGQMPLQRRL (62 aa)) form a disordered region. Basic residues predominate over residues 31 to 40 (TAGRGHKGFK).

The protein belongs to the universal ribosomal protein uL15 family. As to quaternary structure, part of the 50S ribosomal subunit.

Functionally, binds to the 23S rRNA. The sequence is that of Large ribosomal subunit protein uL15 from Desulfotalea psychrophila (strain LSv54 / DSM 12343).